The chain runs to 492 residues: GlcNAc-binding protein A (492 aa).

Positions 1-23 (MNKSSTKTLIALSMMAVSSGVSA) are cleaved as a signal peptide. Positions 24-204 (HGYVSETNDG…AFYNVIDVKF (181 aa)) constitute a Chitin-binding type-4 domain. Residues 443-484 (AGTKVLAEDGNVYQCKEFPYSGYCVQWTETATNFAPGVGSDW) enclose the Chitin-binding type-3 domain.

It belongs to the GbpA family.

It is found in the secreted. In terms of biological role, probably interacts with GlcNAc residues. May promote attachment to both epithelial cell surfaces and chitin. This Aliivibrio fischeri (strain ATCC 700601 / ES114) (Vibrio fischeri) protein is GlcNAc-binding protein A.